Here is a 443-residue protein sequence, read N- to C-terminus: Thymidine phosphorylase (443 aa).

The protein belongs to the thymidine/pyrimidine-nucleoside phosphorylase family. Homodimer.

It catalyses the reaction thymidine + phosphate = 2-deoxy-alpha-D-ribose 1-phosphate + thymine. It participates in pyrimidine metabolism; dTMP biosynthesis via salvage pathway; dTMP from thymine: step 1/2. Its function is as follows. The enzymes which catalyze the reversible phosphorolysis of pyrimidine nucleosides are involved in the degradation of these compounds and in their utilization as carbon and energy sources, or in the rescue of pyrimidine bases for nucleotide synthesis. The protein is Thymidine phosphorylase of Shewanella sediminis (strain HAW-EB3).